Here is a 209-residue protein sequence, read N- to C-terminus: MRVLAKRTETRQLEVLKYIYEQVELKGYPPTVREIGKAVDLSSTSTVHGHLARLEKKGLILRDPTKPRAIELTPEGLEKIGIQPTTIPMLGVVTAGEPILAVEEASDFFPLPPDLRTEENALFMLTIRGESMINAGILDGDQVIVRKQSNANNGDIVIAMTDEDEATCKRFFREVDHIRLQPENDALAPILLDNVTILGKVVGLYRNHI.

Residues 32 to 52 (VREIGKAVDLSSTSTVHGHLA) constitute a DNA-binding region (H-T-H motif). Catalysis depends on for autocatalytic cleavage activity residues serine 131 and lysine 169.

The protein belongs to the peptidase S24 family. As to quaternary structure, homodimer.

The catalysed reaction is Hydrolysis of Ala-|-Gly bond in repressor LexA.. Represses a number of genes involved in the response to DNA damage (SOS response), including recA and lexA. In the presence of single-stranded DNA, RecA interacts with LexA causing an autocatalytic cleavage which disrupts the DNA-binding part of LexA, leading to derepression of the SOS regulon and eventually DNA repair. The polypeptide is LexA repressor (Enterococcus faecalis (strain ATCC 700802 / V583)).